The primary structure comprises 219 residues: Deoxyribose-phosphate aldolase (219 aa).

The Proton donor/acceptor role is filled by D93. The active-site Schiff-base intermediate with acetaldehyde is the K154. K179 acts as the Proton donor/acceptor in catalysis.

Belongs to the DeoC/FbaB aldolase family. DeoC type 1 subfamily.

Its subcellular location is the cytoplasm. It carries out the reaction 2-deoxy-D-ribose 5-phosphate = D-glyceraldehyde 3-phosphate + acetaldehyde. It participates in carbohydrate degradation; 2-deoxy-D-ribose 1-phosphate degradation; D-glyceraldehyde 3-phosphate and acetaldehyde from 2-deoxy-alpha-D-ribose 1-phosphate: step 2/2. Its function is as follows. Catalyzes a reversible aldol reaction between acetaldehyde and D-glyceraldehyde 3-phosphate to generate 2-deoxy-D-ribose 5-phosphate. In Haloquadratum walsbyi (strain DSM 16790 / HBSQ001), this protein is Deoxyribose-phosphate aldolase.